A 302-amino-acid polypeptide reads, in one-letter code: uncharacterized protein (302 aa).

Transmembrane regions (helical) follow at residues 3–23, 39–59, 77–97, 106–126, 128–148, 163–183, 199–219, 227–247, and 254–274; these read ILGV…SDWF, FVIG…LTSA, SCIC…PIIV, LVYL…FSWI, GVVL…NGSA, FSLV…ELFV, VIGF…VSLA, GMVL…ALAV, and LPAE…LYLF.

Belongs to the Ca(2+):cation antiporter (CaCA) (TC 2.A.19) family.

It localises to the cell membrane. This is an uncharacterized protein from Methanocaldococcus jannaschii (strain ATCC 43067 / DSM 2661 / JAL-1 / JCM 10045 / NBRC 100440) (Methanococcus jannaschii).